A 415-amino-acid polypeptide reads, in one-letter code: tRNA(Met) cytidine acetate ligase (415 aa).

ATP is bound by residues 7 to 20 (VVEY…HLYH), G101, N162, and 187 to 188 (RI).

It belongs to the TmcAL family. In terms of assembly, homodimer.

Its subcellular location is the cytoplasm. It catalyses the reaction cytidine(34) in elongator tRNA(Met) + acetate + ATP = N(4)-acetylcytidine(34) in elongator tRNA(Met) + AMP + diphosphate. In terms of biological role, catalyzes the formation of N(4)-acetylcytidine (ac(4)C) at the wobble position of elongator tRNA(Met), using acetate and ATP as substrates. First activates an acetate ion to form acetyladenylate (Ac-AMP) and then transfers the acetyl group to tRNA to form ac(4)C34. The protein is tRNA(Met) cytidine acetate ligase of Bacillus subtilis (strain 168).